The following is a 396-amino-acid chain: Elongation factor Tu (396 aa).

The region spanning 10 to 206 (KPHVNVGTIG…ALDTYIPEPE (197 aa)) is the tr-type G domain. The segment at 19-26 (GHVDHGKT) is G1. A GTP-binding site is contributed by 19–26 (GHVDHGKT). Thr-26 contacts Mg(2+). A G2 region spans residues 60–64 (GITIN). The interval 81–84 (DCPG) is G3. GTP-binding positions include 81–85 (DCPGH) and 136–139 (NKAD). A G4 region spans residues 136 to 139 (NKAD). The interval 174-176 (SAL) is G5.

Belongs to the TRAFAC class translation factor GTPase superfamily. Classic translation factor GTPase family. EF-Tu/EF-1A subfamily. Monomer.

Its subcellular location is the cytoplasm. The enzyme catalyses GTP + H2O = GDP + phosphate + H(+). Functionally, GTP hydrolase that promotes the GTP-dependent binding of aminoacyl-tRNA to the A-site of ribosomes during protein biosynthesis. In Thiobacillus denitrificans (strain ATCC 25259 / T1), this protein is Elongation factor Tu.